The sequence spans 232 residues: 5'-methylthioadenosine/S-adenosylhomocysteine nucleosidase (232 aa).

E12 functions as the Proton acceptor in the catalytic mechanism. Residues G78, I152, and 173-174 (ME) each bind substrate. D197 serves as the catalytic Proton donor.

Belongs to the PNP/UDP phosphorylase family. MtnN subfamily. Homodimer.

The catalysed reaction is S-adenosyl-L-homocysteine + H2O = S-(5-deoxy-D-ribos-5-yl)-L-homocysteine + adenine. It carries out the reaction S-methyl-5'-thioadenosine + H2O = 5-(methylsulfanyl)-D-ribose + adenine. It catalyses the reaction 5'-deoxyadenosine + H2O = 5-deoxy-D-ribose + adenine. It functions in the pathway amino-acid biosynthesis; L-methionine biosynthesis via salvage pathway; S-methyl-5-thio-alpha-D-ribose 1-phosphate from S-methyl-5'-thioadenosine (hydrolase route): step 1/2. In terms of biological role, catalyzes the irreversible cleavage of the glycosidic bond in both 5'-methylthioadenosine (MTA) and S-adenosylhomocysteine (SAH/AdoHcy) to adenine and the corresponding thioribose, 5'-methylthioribose and S-ribosylhomocysteine, respectively. Also cleaves 5'-deoxyadenosine, a toxic by-product of radical S-adenosylmethionine (SAM) enzymes, into 5-deoxyribose and adenine. Thus, is required for in vivo function of the radical SAM enzymes biotin synthase and lipoic acid synthase, that are inhibited by 5'-deoxyadenosine accumulation. This chain is 5'-methylthioadenosine/S-adenosylhomocysteine nucleosidase, found in Salmonella arizonae (strain ATCC BAA-731 / CDC346-86 / RSK2980).